Reading from the N-terminus, the 599-residue chain is MPVRQLPETVVNRIAAGEVVERPASVVKELVENAIDAGASRIDIFTDGGGRRRIGITDDGAGMTHADLTLAVDRHATSKLDDEDLLAIRTLGFRGEALPSIGSVAKLSITTRHAAEPHAWALAVEGGAKSPIVPAALSHGTRVEVSDLFYATPARLKFLKTDRTEAEAIREVVRRLAMARPDIAFSMAGEERAPVTWAAALPGAAGRLTRLGDILGGDFRSNAIEVRSERDGVVVEGFAAAPSLTRANALGQYLFVNGRPVRDKLIIGAVRAAYSDYLPRDRHPVVALFVSLDSREVDANVHPAKTEVRFRDAGLVRALIVHALKEGLAREGKRTAANDAGATISSFRPSFAPRANWDWRSSPSYPVAGSAAFDAAAGFAEREQSGFDVGAPSADVRSYQPSADFTDRPLGAARTQIHQTYIVAQTRDGLVVVDQHAAHERLVYEKLKASLATNGVQRQILLIPEIVELDEATVERLVARGEELATFGLVVESFGPGAVAVRETPSLLGKTDAGALLRDLAEHMAEWDEALPLERRLLHVAATMACHGSVRAGRVLKPEEMNALLREMEDTPNSGQCNHGRPTYVELKLSDIEKLFGRR.

This sequence belongs to the DNA mismatch repair MutL/HexB family.

Its function is as follows. This protein is involved in the repair of mismatches in DNA. It is required for dam-dependent methyl-directed DNA mismatch repair. May act as a 'molecular matchmaker', a protein that promotes the formation of a stable complex between two or more DNA-binding proteins in an ATP-dependent manner without itself being part of a final effector complex. The protein is DNA mismatch repair protein MutL of Rhodopseudomonas palustris (strain BisB18).